We begin with the raw amino-acid sequence, 945 residues long: Endo-1,4-beta-xylanase 1 (945 aa).

Residues 16–41 (NGDRNPDKKSRESMEVSRKDNEEPEK) are compositionally biased toward basic and acidic residues. The segment at 16–50 (NGDRNPDKKSRESMEVSRKDNEEPEKQNNNNVASI) is disordered. CBM-cenC domains lie at 57–197 (NVIV…EGPS), 227–362 (IVVN…IEGP), and 397–541 (NILT…GPSS). Asn86, Asn239, Asn305, Asn349, Asn417, Asn453, and Asn687 each carry an N-linked (GlcNAc...) asparagine glycan. In terms of domain architecture, GH10 spans 589 to 884 (SGASVRVRQI…NEAGKRFLAV (296 aa)). Glu718 serves as the catalytic Proton donor. The Nucleophile role is filled by Glu819.

This sequence belongs to the glycosyl hydrolase 10 (cellulase F) family. Predominantly expressed in vascular bundles, but not in vessel cells. Mostly expressed in stems, at lower levels in roots, and weakly in inflorescences and seedlings.

It localises to the secreted. It is found in the cell wall. It catalyses the reaction Endohydrolysis of (1-&gt;4)-beta-D-xylosidic linkages in xylans.. It participates in glycan degradation; xylan degradation. Functionally, binds to and hydrolyzes insoluble and soluble xylan substrates. Exhibits xylanase activity. In Arabidopsis thaliana (Mouse-ear cress), this protein is Endo-1,4-beta-xylanase 1.